Consider the following 153-residue polypeptide: UPF0266 membrane protein YPTB1631 (153 aa).

The next 3 membrane-spanning stretches (helical) occupy residues 6–26 (LVLVVFIALLLIYAIYDEFIM), 45–65 (LDCMIFVGLIGILIYNNVMAH), and 67–87 (APLTTYLLVGLALVAVYISYI).

This sequence belongs to the UPF0266 family.

Its subcellular location is the cell inner membrane. This chain is UPF0266 membrane protein YPTB1631, found in Yersinia pseudotuberculosis serotype I (strain IP32953).